The primary structure comprises 84 residues: Putative defensin-like protein 165 (84 aa).

Residues 1–27 (MSTKLFSYFMLLVVLFSVLTIIPKTEA) form the signal peptide. 4 disulfide bridges follow: cysteine 31–cysteine 78, cysteine 41–cysteine 60, cysteine 46–cysteine 72, and cysteine 50–cysteine 74.

This sequence belongs to the DEFL family.

Its subcellular location is the secreted. This is Putative defensin-like protein 165 (LCR12) from Arabidopsis thaliana (Mouse-ear cress).